A 641-amino-acid polypeptide reads, in one-letter code: 1-deoxy-D-xylulose-5-phosphate synthase (641 aa).

Residues His-79 and 120 to 122 contribute to the thiamine diphosphate site; that span reads GHS. Mg(2+) is bound at residue Asp-151. Thiamine diphosphate contacts are provided by residues 152–153, Asn-180, Tyr-290, and Glu-372; that span reads GS. Asn-180 is a binding site for Mg(2+).

The protein belongs to the transketolase family. DXPS subfamily. As to quaternary structure, homodimer. It depends on Mg(2+) as a cofactor. Thiamine diphosphate is required as a cofactor.

It carries out the reaction D-glyceraldehyde 3-phosphate + pyruvate + H(+) = 1-deoxy-D-xylulose 5-phosphate + CO2. It participates in metabolic intermediate biosynthesis; 1-deoxy-D-xylulose 5-phosphate biosynthesis; 1-deoxy-D-xylulose 5-phosphate from D-glyceraldehyde 3-phosphate and pyruvate: step 1/1. Catalyzes the acyloin condensation reaction between C atoms 2 and 3 of pyruvate and glyceraldehyde 3-phosphate to yield 1-deoxy-D-xylulose-5-phosphate (DXP). This chain is 1-deoxy-D-xylulose-5-phosphate synthase, found in Rhodopseudomonas palustris (strain TIE-1).